The following is a 201-amino-acid chain: Putative 3-methyladenine DNA glycosylase (201 aa).

The protein belongs to the DNA glycosylase MPG family.

The sequence is that of Putative 3-methyladenine DNA glycosylase from Trichodesmium erythraeum (strain IMS101).